A 700-amino-acid chain; its full sequence is Calpain-2 catalytic subunit (700 aa).

Ala-2 bears the N-acetylalanine mark. A propeptide spans 2 to 19 (AGIAMKLAKDREAAEGLG) (anchors to the small subunit). The Calpain catalytic domain maps to 45–344 (LFQDPSFPAL…YSRLEICNLT (300 aa)). Ca(2+)-binding residues include Ile-89, Gly-91, and Asp-96. Residue Cys-105 is part of the active site. Ca(2+) contacts are provided by Glu-175, Gln-229, and Lys-230. Catalysis depends on residues His-262 and Asn-286. Residues Glu-292, Asp-299, Gln-319, and Glu-323 each contribute to the Ca(2+) site. The tract at residues 345–514 (PDTLTCDSYK…KKADYQTVDD (170 aa)) is domain III. Residues 515 to 529 (EIEANIEEIEANEED) are linker. The segment at 530 to 700 (IGDGFRRLFA…LISWLSFSVL (171 aa)) is domain IV. Ca(2+) is bound by residues Ala-542, Asp-545, Glu-547, Glu-552, Asp-585, Asp-587, Ser-589, Lys-591, Glu-596, Asp-615, Asp-617, Ser-619, Thr-621, Glu-626, Asp-658, and Asn-661. 2 consecutive EF-hand domains span residues 572–605 (FSIE…TKIQ) and 602–637 (TKIQ…AGFK). Positions 667–700 (VRLEILFKIFKQLDPENTGTIQLDLISWLSFSVL) constitute an EF-hand 3 domain.

The protein belongs to the peptidase C2 family. In terms of assembly, forms a heterodimer with a small (regulatory) subunit (CAPNS1). Interacts with CPEB3; this leads to cleavage of CPEB3. It depends on Ca(2+) as a cofactor. In terms of tissue distribution, ubiquitous.

The protein localises to the cytoplasm. It is found in the cell membrane. The enzyme catalyses Broad endopeptidase specificity.. With respect to regulation, activated by 200-1000 micromolar concentrations of calcium and inhibited by calpastatin. Functionally, calcium-regulated non-lysosomal thiol-protease which catalyze limited proteolysis of substrates involved in cytoskeletal remodeling and signal transduction. Proteolytically cleaves MYOC at 'Arg-226'. Proteolytically cleaves CPEB3 following neuronal stimulation which abolishes CPEB3 translational repressor activity, leading to translation of CPEB3 target mRNAs. This Rattus norvegicus (Rat) protein is Calpain-2 catalytic subunit (Capn2).